The following is a 381-amino-acid chain: Estradiol 17-beta-dehydrogenase 2 (381 aa).

Residues 4–24 form a helical; Signal-anchor for type II membrane protein membrane-spanning segment; the sequence is FSSESAWLCLTATAVLGGMLL. 83–112 is an NAD(+) binding site; it reads QKAVLVTGADSGFGHALAKHLDKLGFTVFA. Ser220 lines the substrate pocket. The active-site Proton acceptor is the Tyr233.

Belongs to the short-chain dehydrogenases/reductases (SDR) family. Homodimer. As to expression, highly expressed in the placenta, and in the small intestine, and liver.

It localises to the endoplasmic reticulum membrane. The catalysed reaction is 17beta-estradiol + NAD(+) = estrone + NADH + H(+). It catalyses the reaction testosterone + NAD(+) = androst-4-ene-3,17-dione + NADH + H(+). It carries out the reaction 17beta-hydroxy-5alpha-androstan-3-one + NAD(+) = 5alpha-androstan-3,17-dione + NADH + H(+). The enzyme catalyses (20S)-hydroxypregn-4-en-3-one + NAD(+) = progesterone + NADH + H(+). Catalyzes the NAD-dependent oxidation of highly active 17beta-hydroxysteroids, such as estradiol (E2), testosterone (T), and dihydrotestosterone (DHT), to their less active forms and thus regulates the biological potency of these steroids. Oxidizes estradiol to estrone, testosterone to androstenedione, and dihydrotestosterone to 5alpha-androstan-3,17-dione. Also has 20-alpha-HSD activity. The chain is Estradiol 17-beta-dehydrogenase 2 (Hsd17b2) from Rattus norvegicus (Rat).